The following is a 160-amino-acid chain: SsrA-binding protein (160 aa).

Residues 131-160 form a disordered region; sequence KKEFDKRHTEKERDSDREIQRAMRTKGKDD.

This sequence belongs to the SmpB family.

The protein localises to the cytoplasm. Required for rescue of stalled ribosomes mediated by trans-translation. Binds to transfer-messenger RNA (tmRNA), required for stable association of tmRNA with ribosomes. tmRNA and SmpB together mimic tRNA shape, replacing the anticodon stem-loop with SmpB. tmRNA is encoded by the ssrA gene; the 2 termini fold to resemble tRNA(Ala) and it encodes a 'tag peptide', a short internal open reading frame. During trans-translation Ala-aminoacylated tmRNA acts like a tRNA, entering the A-site of stalled ribosomes, displacing the stalled mRNA. The ribosome then switches to translate the ORF on the tmRNA; the nascent peptide is terminated with the 'tag peptide' encoded by the tmRNA and targeted for degradation. The ribosome is freed to recommence translation, which seems to be the essential function of trans-translation. This Stutzerimonas stutzeri (strain A1501) (Pseudomonas stutzeri) protein is SsrA-binding protein.